Reading from the N-terminus, the 91-residue chain is DNA-directed RNA polymerase subunit omega (91 aa).

Belongs to the RNA polymerase subunit omega family. The RNAP catalytic core consists of 2 alpha, 1 beta, 1 beta' and 1 omega subunit. When a sigma factor is associated with the core the holoenzyme is formed, which can initiate transcription.

It carries out the reaction RNA(n) + a ribonucleoside 5'-triphosphate = RNA(n+1) + diphosphate. Its function is as follows. Promotes RNA polymerase assembly. Latches the N- and C-terminal regions of the beta' subunit thereby facilitating its interaction with the beta and alpha subunits. The polypeptide is DNA-directed RNA polymerase subunit omega (Photorhabdus laumondii subsp. laumondii (strain DSM 15139 / CIP 105565 / TT01) (Photorhabdus luminescens subsp. laumondii)).